A 392-amino-acid polypeptide reads, in one-letter code: Chorismate synthase (392 aa).

Residues arginine 40 and arginine 46 each contribute to the NADP(+) site. FMN contacts are provided by residues 135 to 137 (RAS), 256 to 257 (QA), glycine 300, 315 to 319 (KPISS), and arginine 341.

It belongs to the chorismate synthase family. Homotetramer. The cofactor is FMNH2.

It catalyses the reaction 5-O-(1-carboxyvinyl)-3-phosphoshikimate = chorismate + phosphate. It participates in metabolic intermediate biosynthesis; chorismate biosynthesis; chorismate from D-erythrose 4-phosphate and phosphoenolpyruvate: step 7/7. Its function is as follows. Catalyzes the anti-1,4-elimination of the C-3 phosphate and the C-6 proR hydrogen from 5-enolpyruvylshikimate-3-phosphate (EPSP) to yield chorismate, which is the branch point compound that serves as the starting substrate for the three terminal pathways of aromatic amino acid biosynthesis. This reaction introduces a second double bond into the aromatic ring system. The sequence is that of Chorismate synthase from Salinispora tropica (strain ATCC BAA-916 / DSM 44818 / JCM 13857 / NBRC 105044 / CNB-440).